The following is a 208-amino-acid chain: WEB family protein At2g17940 (208 aa).

A coiled-coil region spans residues Arg-78 to Ser-113.

This sequence belongs to the WEB family.

The protein is WEB family protein At2g17940 of Arabidopsis thaliana (Mouse-ear cress).